The sequence spans 433 residues: Vesicle-associated protein (433 aa).

Repeat copies occupy residues 112 to 122 and 219 to 229. Positions 112-350 are 3 X 11 AA repeats of G-G-G-I-G-G-G-L-G-G-G; that stretch reads GGGIGGGLGG…GGIGGGLGGG (239 aa). The Nuclear localization signal signature appears at 266-274; it reads VDGKKKGKG. Repeat 3 spans residues 340-350; sequence GGGIGGGLGGG. Disordered regions lie at residues 366–389 and 411–433; these read RVGG…DGDG and HGKG…NVSG. The span at 423–433 shows a compositional bias: basic and acidic residues; the sequence is DIERPDLNVSG.

As to expression, egg cortex.

Its subcellular location is the microsome membrane. It is found in the nucleus. The protein resides in the endoplasmic reticulum membrane. Functionally, may function as a multidomain RNA-binding protein. May play a role in nuclear RNA processing and in early development. The sequence is that of Vesicle-associated protein (VAP-1) from Strongylocentrotus purpuratus (Purple sea urchin).